The primary structure comprises 107 residues: Disintegrin lebestatin (107 aa).

The signal sequence occupies residues 1-20 (MIQVLLVIICLAVFPFQGSS). Positions 21–64 (KTLKSGNVNDYEVVNPGTVTGLPKGAVEEKHEPMKGNTLQKFPL) are excised as a propeptide. 4 disulfides stabilise this stretch: Cys65–Cys74, Cys70–Cys93, Cys71–Cys98, and Cys83–Cys100. The Disintegrin domain occupies 65 to 105 (CTTGPCCRQCKLKPAGTTCWKTSRTSHYCTGKSCDCPSYPG). Positions 85–87 (KTS) match the Cell attachment site; atypical (KTS) motif. A propeptide spanning residues 106-107 (NG) is cleaved from the precursor.

In terms of assembly, monomer. In terms of tissue distribution, expressed by the venom gland.

It is found in the secreted. In terms of biological role, specifically interacts with the alpha-1/beta-1 integrin (ITGA1/ITGB1). Exhibits highly inhibitory effects on cell adhesion and cell migration to collagens I and IV. Also shows in vivo anti-angiogenic activity. In Macrovipera lebetinus (Levantine viper), this protein is Disintegrin lebestatin.